The primary structure comprises 93 residues: Large ribosomal subunit protein uL23 (93 aa).

This sequence belongs to the universal ribosomal protein uL23 family. As to quaternary structure, part of the 50S ribosomal subunit. Contacts protein L29, and trigger factor when it is bound to the ribosome.

One of the early assembly proteins it binds 23S rRNA. One of the proteins that surrounds the polypeptide exit tunnel on the outside of the ribosome. Forms the main docking site for trigger factor binding to the ribosome. The protein is Large ribosomal subunit protein uL23 of Wolinella succinogenes (strain ATCC 29543 / DSM 1740 / CCUG 13145 / JCM 31913 / LMG 7466 / NCTC 11488 / FDC 602W) (Vibrio succinogenes).